Reading from the N-terminus, the 232-residue chain is uncharacterized protein (232 aa).

2 disordered regions span residues 123–147 (VAGG…RKYP) and 169–200 (AAAD…PSLR).

The protein belongs to the mycobacterial PPE family.

This is an uncharacterized protein from Mycobacterium tuberculosis (strain ATCC 25618 / H37Rv).